The primary structure comprises 930 residues: MKLKETLNLGQTAFPMRAGLPNKEPQWQEAWDQADIYKKRQALNEGKPAFHLHDGPPYANGNIHVGHALNKISKDIIVRSKSMSGFRAPYVPGWDTHGLPIEQVLAKKGVKRKEMDLAEYLEMCRDYALSQVDKQRDDFKRLGVSADWENPYITLTPDYEADQVRVFGAMADKGYIYRGAKPVYWSWSSESALAEAEIEYHDIDSTSLYYANKVKDGKGILDTDTYIVVWTTTPFTVTASRGLTVGPDMEYVVVAPVGSERKYLLAEVLVDSLAAKFGWENFEIVTHHTGKELNHIVTEHPWDTEVEELVILGDHVTTDSGTGIVHTAPGFGEDDYNVGIANGLDVVVTVDSRGLMMENAGPDFEGQFYDKVTPLVKEKLGDLLLASEVINHSYPFDWRTKKPIIWRAVPQWFASVSKFRQEILDEIEKTNFQPEWGKKRLYNMIRDRGDWVISRQRAWGVPLPIFYAEDGTAIMTKEVTDHVADLFAEYGSIVWWQRDAKDLLPAGYTHPGSPNGLFEKETDIMDVWFDSGSSWNGVMNARENLSYPADLYLEGSDQYRGWFNSSLITSVAVNGHAPYKAVLSQGFVLDGKGEKMSKSLGNTILPSDVEKQFGAEILRLWVTSVDSSNDVRISMDILKQTSEIYRKIRNTLRFLIANTSDFNPKQDAVAYENLGAVDRYMTIKFNQVVDTINKAYAAYDFMAIYKAVVNFVTVDLSAFYLDFAKDVVYIEAANSPERRRMQTVFYDILVKLTKLLTPILPHTAEEIWSYLEHEEEEFVQLAEMPVAQTFSGQEEILEEWSAFMTLRTQAQKALEEARNAKVIGKSLEAHLTIYASQEVKTLLTALNSDIALLMIVSQLTIADEADKPADSVSFEGVAFTVEHAEGEVCERSRRIDPTTRMRSYGVAVCDASAAIIEQYYPEAVAQGFEA.

The 'HIGH' region motif lies at 57-67; it reads PYANGNIHVGH. Residue Glu-554 coordinates L-isoleucyl-5'-AMP. The 'KMSKS' region signature appears at 595 to 599; sequence KMSKS. Lys-598 contributes to the ATP binding site.

Belongs to the class-I aminoacyl-tRNA synthetase family. IleS type 1 subfamily. As to quaternary structure, monomer.

Its subcellular location is the cytoplasm. The enzyme catalyses tRNA(Ile) + L-isoleucine + ATP = L-isoleucyl-tRNA(Ile) + AMP + diphosphate. In terms of biological role, catalyzes the attachment of isoleucine to tRNA(Ile). As IleRS can inadvertently accommodate and process structurally similar amino acids such as valine, to avoid such errors it has two additional distinct tRNA(Ile)-dependent editing activities. One activity is designated as 'pretransfer' editing and involves the hydrolysis of activated Val-AMP. The other activity is designated 'posttransfer' editing and involves deacylation of mischarged Val-tRNA(Ile). This chain is Isoleucine--tRNA ligase, found in Streptococcus agalactiae serotype III (strain NEM316).